The following is a 282-amino-acid chain: Formamidopyrimidine-DNA glycosylase (282 aa).

P2 acts as the Schiff-base intermediate with DNA in catalysis. Catalysis depends on E3, which acts as the Proton donor. The Proton donor; for beta-elimination activity role is filled by K61. 3 residues coordinate DNA: H93, R112, and K158. The segment at 244-278 (DAYGREGEGCRRCGAVMHREKFMNRSSFYCPRCQP) adopts an FPG-type zinc-finger fold. R268 acts as the Proton donor; for delta-elimination activity in catalysis.

Belongs to the FPG family. In terms of assembly, monomer. Zn(2+) serves as cofactor.

The catalysed reaction is Hydrolysis of DNA containing ring-opened 7-methylguanine residues, releasing 2,6-diamino-4-hydroxy-5-(N-methyl)formamidopyrimidine.. It carries out the reaction 2'-deoxyribonucleotide-(2'-deoxyribose 5'-phosphate)-2'-deoxyribonucleotide-DNA = a 3'-end 2'-deoxyribonucleotide-(2,3-dehydro-2,3-deoxyribose 5'-phosphate)-DNA + a 5'-end 5'-phospho-2'-deoxyribonucleoside-DNA + H(+). Its function is as follows. Involved in base excision repair of DNA damaged by oxidation or by mutagenic agents. Acts as a DNA glycosylase that recognizes and removes damaged bases. Has a preference for oxidized purines, such as 7,8-dihydro-8-oxoguanine (8-oxoG). Has AP (apurinic/apyrimidinic) lyase activity and introduces nicks in the DNA strand. Cleaves the DNA backbone by beta-delta elimination to generate a single-strand break at the site of the removed base with both 3'- and 5'-phosphates. The polypeptide is Formamidopyrimidine-DNA glycosylase (Mycobacterium leprae (strain Br4923)).